Consider the following 153-residue polypeptide: MNRDTRLYLAWLVALAATLGSLYFSEIRHFNPCPLCWAQRIFMYPLAVILGIAAFVGDHGVRRYVLPLAALGLGFAIFQNLETWGFVQSIKACTVNAAAACNTPWPVWGTSQDTLNRALTIPVLSMIAFALILALLSWPRQRVTVPESAAVQG.

The chain crosses the membrane as a helical span at residues 4–23 (DTRLYLAWLVALAATLGSLY). Residues Cys33 and Cys36 are joined by a disulfide bond. 2 helical membrane passes run 38–57 (AQRI…AFVG) and 64–81 (YVLP…FQNL). A disulfide bond links Cys93 and Cys101. A helical membrane pass occupies residues 117–139 (RALTIPVLSMIAFALILALLSWP).

The protein belongs to the DsbB family. BdbC subfamily.

Its subcellular location is the cell membrane. Functionally, required for disulfide bond formation in some proteins. This Deinococcus radiodurans (strain ATCC 13939 / DSM 20539 / JCM 16871 / CCUG 27074 / LMG 4051 / NBRC 15346 / NCIMB 9279 / VKM B-1422 / R1) protein is Probable disulfide formation protein.